A 1905-amino-acid chain; its full sequence is Low-density lipoprotein receptor-related protein 4 (1905 aa).

The signal sequence occupies residues 1-20 (MRRWWGALLLGALLCAHGTA). The Extracellular portion of the chain corresponds to 21–1723 (SNLECACGRS…VPAAPGEGLH (1703 aa)). 8 consecutive LDL-receptor class A domains span residues 26 to 67 (ACGR…DGCT), 70 to 106 (TCSP…QDCP), 109 to 144 (ECEE…EQCD), 147 to 183 (KCSD…ESCP), 190 to 226 (PCNL…SDCS), 230 to 266 (PCRS…RNCT), 269 to 305 (MCTA…ENCE), and 311 to 350 (QCAS…QNCR). 30 disulfides stabilise this stretch: Cys27/Cys44, Cys34/Cys57, Cys51/Cys66, Cys71/Cys83, Cys78/Cys96, Cys90/Cys105, Cys110/Cys122, Cys117/Cys135, Cys129/Cys143, Cys148/Cys160, Cys155/Cys173, Cys167/Cys182, Cys191/Cys203, Cys198/Cys216, Cys210/Cys225, Cys231/Cys243, Cys238/Cys256, Cys250/Cys265, Cys270/Cys282, Cys277/Cys295, Cys289/Cys304, Cys312/Cys324, Cys319/Cys337, Cys331/Cys349, Cys358/Cys369, Cys365/Cys378, Cys380/Cys393, Cys399/Cys409, Cys405/Cys418, and Cys420/Cys433. Asn264 carries N-linked (GlcNAc...) asparagine glycosylation. The EGF-like 1; atypical domain occupies 354–394 (GEENCNVNNGGCAQKCQMIRGAVQCTCHTGYRLTEDGRTCQ). An EGF-like 2; calcium-binding domain is found at 395–434 (DVNECAEEGYCSQGCTNSEGAFQCWCEAGYELRPDRRSCK). LDL-receptor class B repeat units follow at residues 480-522 (ELVF…DWVH), 523-565 (DKLY…HPME), 566-609 (GTIY…DYAG), 610-652 (RRMY…FEDS), and 653-693 (LYWT…LHPQ). An N-linked (GlcNAc...) asparagine glycan is attached at Asn498. Residues 698–737 (GKNRCGDNNGGCTHLCLPSGQNYTCACPTGFRKINSHACA) form the EGF-like 3 domain. Intrachain disulfides connect Cys702–Cys713, Cys709–Cys722, and Cys724–Cys736. An N-linked (GlcNAc...) asparagine glycan is attached at Asn719. LDL-receptor class B repeat units lie at residues 785–827 (DHVY…DWVT), 828–870 (NKLY…EPMG), 871–914 (GYMY…DYGS), 915–956 (QRLY…LYGQ), and 957–998 (RIYW…FHRQ). N-linked (GlcNAc...) asparagine glycosylation occurs at Asn901. Residue Asn1077 is glycosylated (N-linked (GlcNAc...) asparagine). LDL-receptor class B repeat units lie at residues 1093 to 1135 (GKVY…DAIG), 1136 to 1178 (RKVY…YHEM), 1179 to 1222 (GFMY…DKTS), 1223 to 1263 (SQLL…LLDS), 1264 to 1306 (YIYW…DRAQ), 1397 to 1439 (GKVY…DWVA), 1440 to 1482 (RNLY…FPRK), 1483 to 1526 (GYLF…DYDT), 1527 to 1568 (RRIY…QDRW), and 1569 to 1610 (IYWT…SPQR). Residues Asn1415 and Asn1467 are each glycosylated (N-linked (GlcNAc...) asparagine). Residues 1659–1696 (PRATSLNEKSPVLPNTLPTTLHSSTTRTRTSPEGAEGR) form a disordered region. The segment covering 1671–1690 (LPNTLPTTLHSSTTRTRTSP) has biased composition (low complexity). The helical transmembrane segment at 1724 to 1746 (VSYAVGGLLSVLLILLVTAALML) threads the bilayer. Topologically, residues 1747–1905 (YRHRKSKFTD…ERKLSSESQV (159 aa)) are cytoplasmic. The disordered stretch occupies residues 1853 to 1905 (SSGSLDDTETEQLLQEEQSECSSVHTATTPERRGSLPDTGWKHERKLSSESQV). Positions 1872 to 1881 (ECSSVHTATT) are enriched in polar residues. Positions 1882-1905 (PERRGSLPDTGWKHERKLSSESQV) are enriched in basic and acidic residues.

Belongs to the LDLR family. In terms of assembly, homooligomer. Interacts with MUSK; the heterodimer forms an AGRIN receptor complex that binds AGRIN resulting in activation of MUSK. Interacts (via the extracellular domain) with SOST; the interaction facilitates the inhibition of Wnt signaling. Interacts with MESD; the interaction promotes glycosylation of LRP4 and its cell-surface expression. Post-translationally, N-glycosylation is required for cell surface location. Expressed in different regions of the brain, mainly in the olfactory bulb, at lower level in the cerebral cortex and hippocampus.

The protein localises to the cell membrane. Functionally, mediates SOST-dependent inhibition of bone formation. Functions as a specific facilitator of SOST-mediated inhibition of Wnt signaling. Plays a key role in the formation and the maintenance of the neuromuscular junction (NMJ), the synapse between motor neuron and skeletal muscle. Directly binds AGRIN and recruits it to the MUSK signaling complex. Mediates the AGRIN-induced phosphorylation of MUSK, the kinase of the complex. The activation of MUSK in myotubes induces the formation of NMJ by regulating different processes including the transcription of specific genes and the clustering of AChR in the postsynaptic membrane. Alternatively, may be involved in the negative regulation of the canonical Wnt signaling pathway, being able to antagonize the LRP6-mediated activation of this pathway. More generally, has been proposed to function as a cell surface endocytic receptor binding and internalizing extracellular ligands for degradation by lysosomes. Plays an essential role in the process of digit differentiation. The polypeptide is Low-density lipoprotein receptor-related protein 4 (Lrp4) (Rattus norvegicus (Rat)).